Reading from the N-terminus, the 318-residue chain is METSDRISPGGGIGAEVPSAYHMAPRPSDSPANQFMGLSLPPMEAPMPSSGEASGKKRRGRPRKYEANGAPLPSSSVPLVKKRVRGKLNGFDMKKMHKTIGFHSSGERFGVGGGVGGGVGSNFTPHVITVNTGEDITMRIISFSQQGPRAICILSANGVISNVTLRQPDSCGGTLTYEGRFEILSLSGSFMETENQGSKGRSGGMSVSLAGPDGRVVGGGVAGLLIAATPIQVVVGSFITSDQQDHQKPRKQRVEHAPAAVMSVPPPPSPPPPAASVFSPTNPDREQPPSSFGISSWTNGQDMPRNSATDINISLPVD.

Disordered stretches follow at residues 1-76 (METS…PSSS) and 241-318 (SDQQ…LPVD). The short motif at 56–64 (KKRRGRPRK) is the Bipartite nuclear localization signal element. Residues 56–68 (KKRRGRPRKYEAN) constitute a DNA-binding region (a.T hook). The PPC domain occupies 120–259 (GSNFTPHVIT…RKQRVEHAPA (140 aa)). The span at 243–256 (QQDHQKPRKQRVEH) shows a compositional bias: basic and acidic residues. Positions 264–274 (VPPPPSPPPPA) are enriched in pro residues. A compositionally biased stretch (polar residues) spans 288–312 (PPSSFGISSWTNGQDMPRNSATDIN).

The protein resides in the nucleus. In terms of biological role, transcription factor that specifically binds AT-rich DNA sequences related to the nuclear matrix attachment regions (MARs). The polypeptide is AT-hook motif nuclear-localized protein 7 (Arabidopsis thaliana (Mouse-ear cress)).